Here is a 467-residue protein sequence, read N- to C-terminus: Uronate isomerase (467 aa).

This sequence belongs to the metallo-dependent hydrolases superfamily. Uronate isomerase family.

It catalyses the reaction D-glucuronate = D-fructuronate. The enzyme catalyses aldehydo-D-galacturonate = keto-D-tagaturonate. It participates in carbohydrate metabolism; pentose and glucuronate interconversion. This chain is Uronate isomerase, found in Haemophilus influenzae (strain 86-028NP).